The primary structure comprises 5635 residues: Hemicentin-1 (5635 aa).

The signal sequence occupies residues 1-21 (MISWEVVHTVFLFALLYSSLA). The VWFA domain occupies 41–216 (TLAFVFDVTG…EVLKWVEEAV (176 aa)). Residues N349 and N390 are each glycosylated (N-linked (GlcNAc...) asparagine). Ig-like C2-type domains lie at 431–517 (PKVT…FDVS), 520–607 (PPVI…VFLT), 612–697 (PKVT…STLR), 702–788 (PKLM…ITLD), 793–883 (PVFI…TTVT), 890–976 (PLIG…TSVV), 981–1067 (PTIQ…VQLT), 1072–1166 (PRVF…VKLN), 1171–1255 (PKIQ…TEIT), 1262–1354 (PTVE…YNLK), 1358–1447 (PPVI…FNID), 1452–1541 (PTII…IKLT), 1546–1634 (PSIK…FHVD), 1638–1724 (PPMI…KEIK), 1733–1821 (PAIE…FEVT), 1826–1914 (PTIK…IQLH), 1919–2007 (PSLE…YSLQ), 2012–2097 (PSIS…RDID), 2104–2190 (PNIM…YNVN), 2195–2285 (PNIG…YNLQ), 2290–2379 (PTIT…YDLS), 2384–2470 (PSII…RKIF), 2478–2564 (PHIV…RSFS), 2571–2662 (PTIA…YEVK), 2666–2763 (PPII…VNIQ), 2766–2864 (PSFQ…YDVR), 2868–2959 (PPII…FNLN), 2964–3051 (PSVI…FSLT), 3056–3146 (PSIK…FHLN), 3151–3240 (PSIE…YFLS), 3245–3335 (PSVA…FNLN), 3340–3429 (PTIR…YNLQ), 3434–3516 (PNMD…GEVS), 3527–3615 (PHIN…YLVR), 3620–3708 (PNIA…FILT), 3713–3797 (PNIK…RRID), 3804–3892 (PSIA…VDLT), 3897–3983 (PSIA…VTLH), 3988–4076 (PVIQ…LNVQ), 4079–4164 (PVIS…TKLT), 4169–4255 (PRIR…VSLT), 4260–4344 (PTFT…GFVY), 4348–4435 (PPVF…MSLT), and 4440–4527 (PIIT…VIVQ). C451 and C499 form a disulfide bridge. N-linked (GlcNAc...) asparagine glycosylation is found at N528, N550, N573, and N620. Cysteines 541 and 591 form a disulfide. C633 and C681 are oxidised to a cystine. A glycan (N-linked (GlcNAc...) asparagine) is linked at N693. An intrachain disulfide couples C723 to C772. N809 is a glycosylation site (N-linked (GlcNAc...) asparagine). 2 disulfides stabilise this stretch: C814/C867 and C911/C960. N970 carries an N-linked (GlcNAc...) asparagine glycan. 2 disulfides stabilise this stretch: C1002–C1051 and C1101–C1150. N-linked (GlcNAc...) asparagine glycosylation occurs at N1158. The cysteines at positions 1192 and 1241 are disulfide-linked. A glycan (N-linked (GlcNAc...) asparagine) is linked at N1272. A disulfide bond links C1288 and C1338. N-linked (GlcNAc...) asparagine glycosylation is present at N1369. Disulfide bonds link C1382–C1431 and C1475–C1525. N1552 carries N-linked (GlcNAc...) asparagine glycosylation. Disulfide bonds link C1569–C1618, C1663–C1712, C1756–C1805, and C1848–C1898. A glycan (N-linked (GlcNAc...) asparagine) is linked at N1929. Cystine bridges form between C1942–C1991 and C2033–C2083. N-linked (GlcNAc...) asparagine glycans are attached at residues N2112 and N2155. Intrachain disulfides connect C2125-C2174, C2218-C2269, and C2314-C2363. N2395 is a glycosylation site (N-linked (GlcNAc...) asparagine). Intrachain disulfides connect C2408/C2457, C2501/C2550, and C2597/C2646. N-linked (GlcNAc...) asparagine glycosylation is present at N2689. 2 disulfides stabilise this stretch: C2696–C2745 and C2799–C2848. An N-linked (GlcNAc...) asparagine glycan is attached at N2887. The cysteines at positions 2894 and 2943 are disulfide-linked. N-linked (GlcNAc...) asparagine glycosylation is present at N2973. Cystine bridges form between C2986-C3035, C3081-C3130, C3173-C3224, C3268-C3319, C3364-C3413, and C3457-C3506. N-linked (GlcNAc...) asparagine glycosylation is found at N3221 and N3300. N-linked (GlcNAc...) asparagine glycosylation is present at N3530. Intrachain disulfides connect C3550-C3599 and C3643-C3692. 2 N-linked (GlcNAc...) asparagine glycosylation sites follow: N3689 and N3727. An intrachain disulfide couples C3734 to C3783. The N-linked (GlcNAc...) asparagine glycan is linked to N3812. 26 disulfides stabilise this stretch: C3825/C3876, C3918/C3967, C4009/C4058, C4100/C4148, C4190/C4239, C4281/C4328, C4371/C4419, C4461/C4509, C4541/C4578, C4545/C4583, C4556/C4568, C4598/C4635, C4602/C4640, C4613/C4625, C4655/C4692, C4659/C4697, C4670/C4682, C4712/C4749, C4716/C4754, C4727/C4739, C4769/C4806, C4773/C4811, C4784/C4796, C4826/C4863, C4830/C4868, and C4841/C4853. N4029 is a glycosylation site (N-linked (GlcNAc...) asparagine). Residues N4401 and N4491 are each glycosylated (N-linked (GlcNAc...) asparagine). TSP type-1 domains follow at residues 4529 to 4584 (HGGF…KPCP), 4586 to 4641 (DGSW…RPCP), 4643 to 4698 (HGAW…RNCP), 4700 to 4755 (HGKW…DPCP), 4757 to 4812 (HGNW…DMCP), and 4814 to 4869 (DGSW…QACP). The N-linked (GlcNAc...) asparagine glycan is linked to N4606. The Nidogen G2 beta-barrel domain occupies 4871–5093 (GPQRARGSVI…SKGDRSNQCP (223 aa)). 2 N-linked (GlcNAc...) asparagine glycosylation sites follow: N4894 and N5040. The EGF-like 1; calcium-binding domain occupies 5107-5146 (DEDECAAGNPCSHSCHNAMGTYYCSCPKGLTIAADGRTCQ). Intrachain disulfides connect C5111-C5121, C5117-C5130, and C5132-C5145. The region spanning 5147 to 5191 (DIDECALGRHTCHAGQDCDNTIGSYRCVVRCGSGFRRTSDGLSCQ) is the EGF-like 2; calcium-binding domain. The 38-residue stretch at 5192-5229 (DINECQESSPCHQRCFNAIGSFHCGCEPGYQLKGRKCM) folds into the EGF-like 3; calcium-binding domain. 3 cysteine pairs are disulfide-bonded: C5196–C5206, C5202–C5215, and C5217–C5228. The EGF-like 4; calcium-binding domain occupies 5230 to 5271 (DVNECRQNVCRPDQHCKNTRGGYKCIDLCPNGMTKAENGTCI). An N-linked (GlcNAc...) asparagine glycan is attached at N5267. The EGF-like 5; calcium-binding domain occupies 5272–5307 (DIDECKDGTHQCRYNQICENTRGSYRCVCPRGYRSQ). Cystine bridges form between C5276/C5289, C5283/C5298, C5319/C5330, C5326/C5339, C5341/C5354, C5436/C5446, C5442/C5455, and C5457/C5470. One can recognise an EGF-like 6; calcium-binding domain in the interval 5315-5355 (DINECEQVPKPCAHQCSNTPGSFKCICPPGQHLLGDGKSCA). Residues 5432–5471 (DIDECENTDACQHECKNTFGSYQCICPPGYQLTHNGKTCQ) form the EGF-like 7; calcium-binding domain. N5615 carries an N-linked (GlcNAc...) asparagine glycan.

As to expression, expressed in hair follicles and in the dermis (at protein level). In terms of tissue distribution, expressed in skin fibroblasts and retinal pigment epithelium (RPE) cells.

It localises to the secreted. The protein resides in the extracellular space. The protein localises to the extracellular matrix. It is found in the basement membrane. Its subcellular location is the cytoplasm. It localises to the cell junction. The protein resides in the cleavage furrow. Functionally, involved in transforming growth factor beta-mediated rearrangement of the podocyte cytoskeleton which includes reduction of F-actin fibers and broadening, flattening and elongation of podocytes. Plays a role in basement membrane organization. May promote cleavage furrow maturation during cytokinesis in preimplantation embryos. May play a role in the architecture of adhesive and flexible epithelial cell junctions. May play a role during myocardial remodeling by imparting an effect on cardiac fibroblast migration. This Homo sapiens (Human) protein is Hemicentin-1 (HMCN1).